Reading from the N-terminus, the 625-residue chain is MMNESLTEKRNELSLSFAALGVVFGDIGTSPLYAFGQVIKYFPINDHNIYGILSLIFWSLIIIVSIKYLVIVFRADNDGEGGIIALAGVIRQKIKQPGGWLLFITLVGIGLIIGDGMLTPAISILSAVEGLESLSPNLAKYVLPVTLIILFFLFKMQSIGTGKIGVYFAPVMLVWFITIGILGFLQIIQNPKVLMAINPYYAINFFMIHKYLALFILGGVFLVMTGGEALFADLGHFGKKAIRTGWFAVALPALLLCYFGQGALVLMHTEDIKYPFFSLSPDWFLPVMIILATLATIIASQAIISAAFSILKQASLLNLIPRLKIVFTSKFEKGEVYLPLINFILALGTCSLVVIFKSSSNLADAYGIAVNLDMLITTVLVGIIAYRCWSWHAFKILIFLLILIIELAFFAGNIPKLLTGGWIPILIAFLGFVVMYTWHCGFEKLRELHHRDALMDAFIIDELNQNKISRQPGMGLYIIDPYDCEGESLLHHLRLNRIFFENMVFVSIKIENKPYIPIEDKFELIKKAEGFYLIFIHYGFTENINLPNELDEMFKRVYLPFDVIKNKLIYFIEIVFVEMTGERQKHMYLWQKHFFSLMIRNAVPDIQFYQLPYNNTIAIGTYYQF.

12 helical membrane passes run 15–35 (LSFAALGVVFGDIGTSPLYAF), 52–72 (ILSLIFWSLIIIVSIKYLVIV), 98–118 (GGWLLFITLVGIGLIIGDGML), 134–154 (LSPNLAKYVLPVTLIILFFLF), 164–184 (IGVYFAPVMLVWFITIGILGF), 212–232 (LALFILGGVFLVMTGGEALFA), 246–266 (WFAVALPALLLCYFGQGALVL), 284–304 (FLPVMIILATLATIIASQAII), 336–356 (VYLPLINFILALGTCSLVVIF), 365–385 (AYGIAVNLDMLITTVLVGIIA), 394–414 (FKILIFLLILIIELAFFAGNI), and 417–437 (LLTGGWIPILIAFLGFVVMYT).

The protein belongs to the HAK/KUP transporter (TC 2.A.72) family.

It localises to the cell inner membrane. The enzyme catalyses K(+)(in) + H(+)(in) = K(+)(out) + H(+)(out). Functionally, transport of potassium into the cell. Likely operates as a K(+):H(+) symporter. In Legionella pneumophila (strain Corby), this protein is Probable potassium transport system protein Kup 2.